Consider the following 353-residue polypeptide: Basic membrane protein C (353 aa).

An N-terminal signal peptide occupies residues 1-16 (MFKRFIFITLSLLVFA). A lipid anchor (N-palmitoyl cysteine) is attached at Cys17. Cys17 carries S-diacylglycerol cysteine lipidation.

This sequence belongs to the BMP lipoprotein family. Monomer.

It localises to the cell inner membrane. In terms of biological role, may be part of an ABC-type nucleoside uptake system involved in the purine salvage pathway. This Borreliella burgdorferi (strain ATCC 35210 / DSM 4680 / CIP 102532 / B31) (Borrelia burgdorferi) protein is Basic membrane protein C (bmpC).